Consider the following 534-residue polypeptide: Probable alpha-galactosidase A (534 aa).

The N-terminal stretch at Met1–Ser25 is a signal peptide. A disulfide bridge connects residues Cys47 and Cys79. N-linked (GlcNAc...) asparagine glycosylation is found at Asn50, Asn88, Asn94, and Asn124. Cysteines 127 and 157 form a disulfide. The Nucleophile role is filled by Asp155. Asn204 is a glycosylation site (N-linked (GlcNAc...) asparagine). The active-site Proton donor is Asp213. One can recognise a Ricin B-type lectin domain in the interval Cys413 to Leu534. A disulfide bridge links Cys430 with Cys443. Asn444 is a glycosylation site (N-linked (GlcNAc...) asparagine). Cysteines 468 and 481 form a disulfide.

This sequence belongs to the glycosyl hydrolase 27 family.

It is found in the secreted. It carries out the reaction Hydrolysis of terminal, non-reducing alpha-D-galactose residues in alpha-D-galactosides, including galactose oligosaccharides, galactomannans and galactolipids.. Hydrolyzes a variety of simple alpha-D-galactoside as well as more complex molecules such as oligosaccharides and polysaccharides. The chain is Probable alpha-galactosidase A (aglA) from Aspergillus oryzae (strain ATCC 42149 / RIB 40) (Yellow koji mold).